A 30-amino-acid chain; its full sequence is Cyclotide cter-G (30 aa).

Residues 1–30 constitute a cross-link (cyclopeptide (Gly-Asn)); it reads GLPCGESCVFIPCITTVVGCSCKNKVCYNN. 3 cysteine pairs are disulfide-bonded: C4–C20, C8–C22, and C13–C27.

Contains 3 disulfide bonds. Post-translationally, this is a cyclic peptide.

Its function is as follows. Probably participates in a plant defense mechanism. This Clitoria ternatea (Butterfly pea) protein is Cyclotide cter-G.